The following is a 241-amino-acid chain: 4-hydroxy-tetrahydrodipicolinate reductase (241 aa).

Residues 7–12 (GVNGHM), 74–76 (GTT), and 98–101 (STNM) each bind NAD(+). Histidine 131 serves as the catalytic Proton donor/acceptor. Histidine 132 provides a ligand contact to (S)-2,3,4,5-tetrahydrodipicolinate. The active-site Proton donor is lysine 135. 141–142 (GS) provides a ligand contact to (S)-2,3,4,5-tetrahydrodipicolinate.

This sequence belongs to the DapB family.

Its subcellular location is the cytoplasm. It catalyses the reaction (S)-2,3,4,5-tetrahydrodipicolinate + NAD(+) + H2O = (2S,4S)-4-hydroxy-2,3,4,5-tetrahydrodipicolinate + NADH + H(+). The enzyme catalyses (S)-2,3,4,5-tetrahydrodipicolinate + NADP(+) + H2O = (2S,4S)-4-hydroxy-2,3,4,5-tetrahydrodipicolinate + NADPH + H(+). It participates in amino-acid biosynthesis; L-lysine biosynthesis via DAP pathway; (S)-tetrahydrodipicolinate from L-aspartate: step 4/4. In terms of biological role, catalyzes the conversion of 4-hydroxy-tetrahydrodipicolinate (HTPA) to tetrahydrodipicolinate. This Alkaliphilus oremlandii (strain OhILAs) (Clostridium oremlandii (strain OhILAs)) protein is 4-hydroxy-tetrahydrodipicolinate reductase.